The sequence spans 136 residues: Cell wall synthesis protein CwsA (136 aa).

A helical transmembrane segment spans residues 94-114 (LLIAAVAVTVLGGGAAAFSIV).

It belongs to the CwsA family. In terms of assembly, interacts with CrgA and Wag31.

Its subcellular location is the cell membrane. Its function is as follows. Required for regulated cell division, cell wall synthesis and the maintenance of cell shape. The chain is Cell wall synthesis protein CwsA from Mycolicibacterium smegmatis (strain ATCC 700084 / mc(2)155) (Mycobacterium smegmatis).